Consider the following 244-residue polypeptide: L-xylulose reductase (244 aa).

Residue Met1 is modified to N-acetylmethionine. NADP(+) is bound at residue 11–39 (LVTGAGKGIGRSTVLALKAAGAQVVAVSR). An Omega-N-methylarginine modification is found at Arg21. Ser136 provides a ligand contact to substrate. The active-site Proton acceptor is Tyr149. Lys153 is an active-site residue.

The protein belongs to the short-chain dehydrogenases/reductases (SDR) family. Homotetramer. As to expression, highly expressed in kidney and liver. Expressed in epididymis. Expressed at intermediate level in lung. Weakly expressed in brain, heart, spleen and testis.

The protein resides in the membrane. It carries out the reaction xylitol + NADP(+) = L-xylulose + NADPH + H(+). Catalyzes the NADPH-dependent reduction of several pentoses, tetroses, trioses, alpha-dicarbonyl compounds and L-xylulose. Participates in the uronate cycle of glucose metabolism. May play a role in the water absorption and cellular osmoregulation in the proximal renal tubules by producing xylitol, an osmolyte, thereby preventing osmolytic stress from occurring in the renal tubules. The chain is L-xylulose reductase (DCXR) from Cavia porcellus (Guinea pig).